A 176-amino-acid chain; its full sequence is Lipoprotein signal peptidase (176 aa).

3 helical membrane-spanning segments follow: residues 12 to 32 (WYWM…WVLA), 67 to 87 (WQRW…TIWL), and 94 to 116 (MWRL…IDRL). Active-site residues include Asp-123 and Asp-141. The helical transmembrane segment at 137-157 (FNIADSAICVGAALIIIDSII) threads the bilayer.

It belongs to the peptidase A8 family.

The protein resides in the cell inner membrane. It catalyses the reaction Release of signal peptides from bacterial membrane prolipoproteins. Hydrolyzes -Xaa-Yaa-Zaa-|-(S,diacylglyceryl)Cys-, in which Xaa is hydrophobic (preferably Leu), and Yaa (Ala or Ser) and Zaa (Gly or Ala) have small, neutral side chains.. Its pathway is protein modification; lipoprotein biosynthesis (signal peptide cleavage). In terms of biological role, this protein specifically catalyzes the removal of signal peptides from prolipoproteins. In Shewanella woodyi (strain ATCC 51908 / MS32), this protein is Lipoprotein signal peptidase.